Here is a 1375-residue protein sequence, read N- to C-terminus: DNA-directed RNA polymerase subunit beta (1375 aa).

Belongs to the RNA polymerase beta chain family. As to quaternary structure, the RNAP catalytic core consists of 2 alpha, 1 beta, 1 beta' and 1 omega subunit. When a sigma factor is associated with the core the holoenzyme is formed, which can initiate transcription.

It catalyses the reaction RNA(n) + a ribonucleoside 5'-triphosphate = RNA(n+1) + diphosphate. In terms of biological role, DNA-dependent RNA polymerase catalyzes the transcription of DNA into RNA using the four ribonucleoside triphosphates as substrates. This Coxiella burnetii (strain Dugway 5J108-111) protein is DNA-directed RNA polymerase subunit beta.